Here is a 265-residue protein sequence, read N- to C-terminus: Sulfur carrier protein FdhD (265 aa).

Catalysis depends on C107, which acts as the Cysteine persulfide intermediate.

It belongs to the FdhD family.

The protein resides in the cytoplasm. Required for formate dehydrogenase (FDH) activity. Acts as a sulfur carrier protein that transfers sulfur from IscS to the molybdenum cofactor prior to its insertion into FDH. The protein is Sulfur carrier protein FdhD of Staphylococcus aureus (strain NCTC 8325 / PS 47).